The chain runs to 83 residues: Neurotoxin LmNaTx34.5 (83 aa).

The N-terminal stretch at 1–15 (FILVVIALMVIEVKS) is a signal peptide. Residues 16–82 (DGYLMVRAGR…IWTYEKNTCS (67 aa)) enclose the LCN-type CS-alpha/beta domain. 4 disulfide bridges follow: Cys29/Cys81, Cys33/Cys54, Cys40/Cys61, and Cys44/Cys63.

The protein belongs to the long (4 C-C) scorpion toxin superfamily. Sodium channel inhibitor family. Beta subfamily. Expressed by the venom gland.

It localises to the secreted. Functionally, binds voltage-independently at site-4 of sodium channels (Nav) and shift the voltage of activation toward more negative potentials thereby affecting sodium channel activation and promoting spontaneous and repetitive firing. This is Neurotoxin LmNaTx34.5 from Lychas mucronatus (Chinese swimming scorpion).